The primary structure comprises 328 residues: uncharacterized protein (328 aa).

Coiled coils occupy residues 67–190 (FKEQ…VLEE) and 223–251 (MAQR…DNMM).

This is an uncharacterized protein from Mus musculus (Mouse).